The sequence spans 371 residues: 4-hydroxy-3-methylbut-2-en-1-yl diphosphate synthase (flavodoxin) (371 aa).

[4Fe-4S] cluster-binding residues include C270, C273, C305, and E312.

This sequence belongs to the IspG family. [4Fe-4S] cluster serves as cofactor.

The catalysed reaction is (2E)-4-hydroxy-3-methylbut-2-enyl diphosphate + oxidized [flavodoxin] + H2O + 2 H(+) = 2-C-methyl-D-erythritol 2,4-cyclic diphosphate + reduced [flavodoxin]. It functions in the pathway isoprenoid biosynthesis; isopentenyl diphosphate biosynthesis via DXP pathway; isopentenyl diphosphate from 1-deoxy-D-xylulose 5-phosphate: step 5/6. Converts 2C-methyl-D-erythritol 2,4-cyclodiphosphate (ME-2,4cPP) into 1-hydroxy-2-methyl-2-(E)-butenyl 4-diphosphate. The protein is 4-hydroxy-3-methylbut-2-en-1-yl diphosphate synthase (flavodoxin) of Shewanella sp. (strain ANA-3).